The sequence spans 355 residues: VDAAVLEKLQAGFKKLEAATDCKSLLKKYLSKDIFDKLKGQKTSLGATLLDVIQSGVENLDSGVGIYAPDAEAYTLFAPLFDPIIEDYHVGFKQTDKHPNKDFGDVSSFVNVDPEGQYVISTRVRCGRSMEGYPFNPCLTEAQYKEMQQKVSSTLSSLEGELKGTYFPLTGMSKEVQQKLIDDHFLFKEGDRFLQAANACRYWPAGRGIYHNDNKTFLVWVNEEDHLRIISMQMGGDLGQVFRRLTSAVNEIEKRIPFSHHDRLGFLTFCPTNLGTTVRASVHIKLPKLAANRDKLEEVAGKYNLQVRGTRGEHTEAEGGIYDISNKRRMGLTEFQAVKEMQDGILQLIKMEKEM.

Residues 8 to 90 (KLQAGFKKLE…FDPIIEDYHV (83 aa)) enclose the Phosphagen kinase N-terminal domain. Residue 63-67 (GVGIY) participates in L-arginine binding. The Phosphagen kinase C-terminal domain maps to 118–355 (YVISTRVRCG…LQLIKMEKEM (238 aa)). Residues 121–125 (STRVR) and histidine 184 contribute to the ATP site. An L-arginine-binding site is contributed by glutamate 224. An ATP-binding site is contributed by arginine 228. An L-arginine-binding site is contributed by cysteine 270. Residues 279-283 (RASVH) and 308-313 (RGTRGE) contribute to the ATP site. Glutamate 313 is a binding site for L-arginine.

Belongs to the ATP:guanido phosphotransferase family. As to quaternary structure, monomer.

It carries out the reaction L-arginine + ATP = N(omega)-phospho-L-arginine + ADP + H(+). This chain is Arginine kinase, found in Penaeus japonicus (Kuruma prawn).